The chain runs to 280 residues: Aquaporin PIP2-7 (280 aa).

M1 carries the post-translational modification N-acetylmethionine. Over M1–R38 the chain is Cytoplasmic. At K3 the chain carries N6,N6-dimethyllysine. Residues A39 to I59 form a helical membrane-spanning segment. At G60 to D69 the chain is on the extracellular side. A helical membrane pass occupies residues G70–C90. The Cytoplasmic segment spans residues T91–A118. An NPA 1 motif is present at residues N100 to A102. A helical membrane pass occupies residues L119–F139. Over M140–K160 the chain is Extracellular. Residues G161–A181 traverse the membrane as a helical segment. Over T182–H192 the chain is Cytoplasmic. A helical transmembrane segment spans residues I193–I213. Residues P214–W242 lie on the Extracellular side of the membrane. The NPA 2 signature appears at N221 to A223. Residues I243–L263 traverse the membrane as a helical segment. Residues R264–N280 lie on the Cytoplasmic side of the membrane. Residues S273 and S276 each carry the phosphoserine modification. Position 279 is a phosphothreonine (T279).

Belongs to the MIP/aquaporin (TC 1.A.8) family. PIP (TC 1.A.8.11) subfamily. As to quaternary structure, interacts with SYP61 and SYP121 in trafficking vesicles and at the plasma membrane. Highly expressed in flowers, expressed at low levels in siliques, and at low level in leaves and roots. Highly levels in elongating cells in both roots and shoots.

The protein resides in the cell membrane. Functionally, water channel required to facilitate the transport of water across cell membrane. May be involved in the osmoregulation in plants under high osmotic stress such as under a high salt condition. This is Aquaporin PIP2-7 from Arabidopsis thaliana (Mouse-ear cress).